The primary structure comprises 152 residues: Ribosome maturation factor RimP (152 aa).

It belongs to the RimP family.

The protein resides in the cytoplasm. In terms of biological role, required for maturation of 30S ribosomal subunits. The protein is Ribosome maturation factor RimP of Photorhabdus laumondii subsp. laumondii (strain DSM 15139 / CIP 105565 / TT01) (Photorhabdus luminescens subsp. laumondii).